The sequence spans 348 residues: Gamma-glutamyl hydrolase 1 (348 aa).

The first 23 residues, 1–23 (MIDNNCLYKEELNRNSYSGLAKE), serve as a signal peptide directing secretion. The Gamma-glutamyl hydrolase domain occupies 46 to 342 (SPDPNLNYRP…RGYDEVYIFT (297 aa)). Residue cysteine 156 is the Nucleophile of the active site. Residue histidine 269 is part of the active site.

It belongs to the peptidase C26 family. Highly expressed in roots and at lower levels in leaves, stems and siliques.

It localises to the vacuole. The protein resides in the secreted. Its subcellular location is the extracellular space. The protein localises to the cell wall. The catalysed reaction is (6S)-5,6,7,8-tetrahydrofolyl-(gamma-L-Glu)(n) + (n-1) H2O = (6S)-5,6,7,8-tetrahydrofolate + (n-1) L-glutamate. Cleaves the polyglutamate sidechains of folate polyglutamates in the vacuole. Is important for polyglutamyl tail length determination before vacuolar exit. Plays a role in folate stability and intracellular folate content. The polypeptide is Gamma-glutamyl hydrolase 1 (GGH1) (Arabidopsis thaliana (Mouse-ear cress)).